We begin with the raw amino-acid sequence, 309 residues long: Olfactory receptor 5B2 (309 aa).

At Met-1 to Ile-23 the chain is on the extracellular side. Asn-3 carries N-linked (GlcNAc...) asparagine glycosylation. Residues Pro-24–Ile-47 form a helical membrane-spanning segment. Residues Leu-48–Thr-55 are Cytoplasmic-facing. A helical membrane pass occupies residues Pro-56–Pro-77. Residues Lys-78–Gln-98 lie on the Extracellular side of the membrane. The cysteines at positions 95 and 187 are disulfide-linked. Residues Met-99–Tyr-118 traverse the membrane as a helical segment. Topologically, residues Asp-119 to Ser-137 are cytoplasmic. The helical transmembrane segment at Val-138–Phe-156 threads the bilayer. The Extracellular segment spans residues His-157–Ser-193. A helical transmembrane segment spans residues Glu-194–Leu-217. Residues Phe-218–Lys-234 lie on the Cytoplasmic side of the membrane. The helical transmembrane segment at Ala-235–Tyr-257 threads the bilayer. At Leu-258–Lys-270 the chain is on the extracellular side. A helical transmembrane segment spans residues Met-271–Leu-290. Residues Arg-291–Leu-309 are Cytoplasmic-facing.

The protein belongs to the G-protein coupled receptor 1 family.

The protein resides in the cell membrane. Functionally, odorant receptor. This is Olfactory receptor 5B2 (OR5B2) from Homo sapiens (Human).